The chain runs to 137 residues: Ribonuclease VapC27 (137 aa).

The PINc domain maps to Val-7–Thr-125. 2 residues coordinate Mg(2+): Asp-8 and Asp-101.

The protein belongs to the PINc/VapC protein family. As to quaternary structure, interacts with cognate antitoxin VapB27. The cofactor is Mg(2+).

It localises to the secreted. In terms of biological role, probably the toxic component of a type II toxin-antitoxin (TA) system. An RNase. Its cognate antitoxin is VapB27. The polypeptide is Ribonuclease VapC27 (Mycobacterium tuberculosis (strain ATCC 25618 / H37Rv)).